A 306-amino-acid polypeptide reads, in one-letter code: uncharacterized protein (306 aa).

The next 10 helical transmembrane spans lie at 6–26 (LLGFTFALITAMAWGSLPIAL), 35–55 (AQTIVWYRFIIAAVSLLALLA), 69–89 (YAWIMLIGVIGLTSNFLLFSS), 98–118 (VAQIFIHLSSFGMLICGVLIF), 122–142 (LGLHQKIGLFLLLIGLGLFFN), 154–174 (YSTGVILGVGGALIWVAYGMA), 186–206 (QILLMMYLGCAIAFMPMADFS), 211–231 (LTPLALICFIYCCLNTLIGYG), 247–267 (VVITLVPLFTILFSHIAHYFS), and 281–301 (YIGAFVVVCGAILSAIGHKLL). EamA domains lie at 17–142 (MAWG…LFFN) and 166–296 (LIWV…LSAI).

It belongs to the EamA transporter family.

It localises to the cell membrane. This is an uncharacterized protein from Haemophilus influenzae (strain ATCC 51907 / DSM 11121 / KW20 / Rd).